A 184-amino-acid chain; its full sequence is Tumor necrosis factor receptor superfamily member 17 (184 aa).

Topologically, residues 1–54 (MLQMAGQCSQNEYFDSLLHACIPCQLRCSSNTPPLTCQRYCNASVTNSVKGTNA) are extracellular. One copy of the TNFR-Cys repeat lies at 7 to 41 (QCSQNEYFDSLLHACIPCQLRCSSNTPPLTCQRYC). Intrachain disulfides connect cysteine 8-cysteine 21, cysteine 24-cysteine 37, and cysteine 28-cysteine 41. Residues 55-77 (ILWTCLGLSLIISLAVFVLMFLL) form a helical; Signal-anchor for type III membrane protein membrane-spanning segment. The Cytoplasmic portion of the chain corresponds to 78–184 (RKINSEPLKD…TEIEKSISAR (107 aa)).

In terms of assembly, associates with TRAF1, TRAF2, TRAF3, TRAF5 and TRAF6. In terms of tissue distribution, expressed in mature B-cells, but not in T-cells or monocytes.

It is found in the cell membrane. The protein resides in the endomembrane system. Receptor for TNFSF13B/BLyS/BAFF and TNFSF13/APRIL. Promotes B-cell survival and plays a role in the regulation of humoral immunity. Activates NF-kappa-B and JNK. This chain is Tumor necrosis factor receptor superfamily member 17 (TNFRSF17), found in Homo sapiens (Human).